The following is a 421-amino-acid chain: Core-capsid bridging protein (421 aa).

It belongs to the adenoviridae core-capsid bridging protein family. As to quaternary structure, monomer. Homodimer. Exists in equilibrium between monomers and dimers in solution. Interacts with the histone-like nucleoprotein; this interactions bridge the virus core to the capsid. Interacts with core protein X; this interactions bridge the virus core to the capsid. Interacts with the endosome lysis protein VI; this interactions bridge the virus core to the capsid. Interacts with the peripentonal hexons. Interacts with host NPM1; this interaction might play a role in virus assembly.

The protein resides in the virion. The protein localises to the host nucleus. Its subcellular location is the host nucleolus. Functionally, associates loosely with the viral DNA to form an outer shell around the nucleoprotein-DNA complex and links it with the capsid by binding the endosome lysis protein. Dissociates from the viral genome during entry. Might be involved in nuclear capsid assembly of the viral particles through its association with NPM1/nucleophosmin. In Canine adenovirus serotype 1 (strain RI261) (CAdV-1), this protein is Core-capsid bridging protein.